We begin with the raw amino-acid sequence, 39 residues long: Photosystem II reaction center protein L (39 aa).

Residues 18–38 form a helical membrane-spanning segment; that stretch reads SLYLGLLLVFVLGILFSSYFF.

It belongs to the PsbL family. PSII is composed of 1 copy each of membrane proteins PsbA, PsbB, PsbC, PsbD, PsbE, PsbF, PsbH, PsbI, PsbJ, PsbK, PsbL, PsbM, PsbT, PsbX, PsbY, Psb30/Ycf12, peripheral proteins PsbO, CyanoQ (PsbQ), PsbU, PsbV and a large number of cofactors. It forms dimeric complexes.

Its subcellular location is the cellular thylakoid membrane. Functionally, one of the components of the core complex of photosystem II (PSII). PSII is a light-driven water:plastoquinone oxidoreductase that uses light energy to abstract electrons from H(2)O, generating O(2) and a proton gradient subsequently used for ATP formation. It consists of a core antenna complex that captures photons, and an electron transfer chain that converts photonic excitation into a charge separation. This subunit is found at the monomer-monomer interface and is required for correct PSII assembly and/or dimerization. The protein is Photosystem II reaction center protein L of Prochlorococcus marinus (strain SARG / CCMP1375 / SS120).